Consider the following 282-residue polypeptide: MADNVTPLASLSLTHVYYNPDDPISLLCAWLALVPQALCVVYATLIWSTREAEVILMFAGQLACEAANFALKRLIKEERPARIHSTGGKGYGMPSSHAQFVSFWAVALGLFLLARHTPREQQQQQQQKQKQRERKKQVTNVKTTTTNGSGNGSLFKTLTDSATDLERYAHEPWSFAHRFVASLGALVLAGAVAWSRTYLGYHTEKQVLVGCGAGTLCAVAWFVVTHVVRQSGLLGQILDFPVVRWFRVRDLVVEEDLPQAGWEKWEEQRVARREVEERKKAL.

2 consecutive transmembrane segments (helical) span residues 26-46 and 93-113; these read LLCAWLALVPQALCVVYATLI and MPSSHAQFVSFWAVALGLFLL. The disordered stretch occupies residues 121 to 153; the sequence is QQQQQQQKQKQRERKKQVTNVKTTTTNGSGNGS. Over residues 138–148 the composition is skewed to low complexity; sequence VTNVKTTTTNG. 2 helical membrane-spanning segments follow: residues 173–193 and 207–227; these read WSFAHRFVASLGALVLAGAVA and VLVGCGAGTLCAVAWFVVTHV.

Belongs to the dolichyldiphosphatase family.

Its subcellular location is the endoplasmic reticulum membrane. It carries out the reaction a di-trans,poly-cis-dolichyl diphosphate + H2O = a di-trans,poly-cis-dolichyl phosphate + phosphate + H(+). It participates in protein modification; protein glycosylation. This chain is Putative dolichyldiphosphatase, found in Neurospora crassa (strain ATCC 24698 / 74-OR23-1A / CBS 708.71 / DSM 1257 / FGSC 987).